A 463-amino-acid chain; its full sequence is Peptidase inhibitor 16 (463 aa).

Residues 1–27 form the signal peptide; the sequence is MHGSCSFLMLLLPLLLLLVATTGPVGA. The 129-residue stretch at 37 to 165 folds into the SCP domain; that stretch reads VELHNLYRAQ…TNIELLVCNY (129 aa). Asn114 is a glycosylation site (N-linked (GlcNAc...) asparagine). Disordered regions lie at residues 262–281, 303–341, and 383–408; these read TQAPTSLATKDPPSMATEAP, EPVTFPKSTHVPIPKSADKVTDKTKVPSRSPENSLDPKM, and LQATLDHTGHTSSKSLPNFPNTSATA. Over residues 318–327 the composition is skewed to basic and acidic residues; that stretch reads SADKVTDKTK. Residues 386–395 are O-glycosylated at one site; that stretch reads TLDHTGHTSS. Polar residues predominate over residues 392-408; sequence HTSSKSLPNFPNTSATA. Asn403 and Asn409 each carry an N-linked (GlcNAc...) asparagine glycan.

This sequence belongs to the CRISP family. Interacts with PSP94/MSMB. N- and O-glycosylated. O-glycosylated with core 1 or possibly core 8 glycans. As to expression, expressed in prostate, testis, ovary and intestine. Concentrates in prostate cancer patient's sera.

Its subcellular location is the secreted. Functionally, may inhibit cardiomyocyte growth. This chain is Peptidase inhibitor 16 (PI16), found in Homo sapiens (Human).